We begin with the raw amino-acid sequence, 1380 residues long: Protein TORNADO 1 (1380 aa).

LRR repeat units follow at residues 26 to 46, 47 to 70, 105 to 132, 161 to 184, 266 to 289, 299 to 322, 323 to 346, 348 to 371, 446 to 472, and 476 to 502; these read FFNLQTLSFSSSGNTTHCQLI, TESSMNINVTRDNLTSLSQIFIEL, TSKIKQLAFRKNRFSEQCLNELSEILKR, NDSLEELQIWEDSIGSKGAEELSR, NTTVRSLDMTGAKLNSRWAKEFRW, EVKLSKTGLKDKAVVYIAAGLFKN, KSLQSLYVDGNRFGSVGVEDLLCP, SRFSALQLQANITLRSIVFGGSNT, INPLIEEIDLARTPLQDSGKADEIYQK, and NGRKIDEAETDDSLKDMPLTEPKSVRA. In terms of domain architecture, Roc spans 493–702; sequence PLTEPKSVRA…HHIRMTSKAI (210 aa). GTP is bound by residues 506-513 and 567-571; these read GQNYAGKT and NLAGQ. A helical membrane pass occupies residues 574-594; sequence FFALHDLMFPSPCFFLIVLSL. LRR repeat units lie at residues 640-665, 688-712, 799-826, 1023-1046, 1131-1154, and 1229-1254; these read LTHSEKINLQSESFQATVGCIQRLRD, VSKLTHHIRMTSKAILQRVPRVYQL, LTQLIKLDVRKQSTGERNGFVSRKELEK, QSQFVSLHRLKEALSSVPAETMYD, EAVLQRLKIIEQEIRDLKQEIQGL, and QLGCDVMQIDNQAVKCLAPYMTNFMK. Position 641-644 (641-644) interacts with GTP; sequence THSE. Residues 757 to 931 enclose the COR domain; the sequence is NIQIVETRRH…LQVHLHNRIM (175 aa). 2 consecutive transmembrane segments (helical) span residues 1255 to 1275 and 1287 to 1307; these read LVTFALRIGANWAAGMGHMIP and PAVMTGAAGAAGAIGVAAALG.

As to expression, expressed in seedlings, roots, leaves, stems and flowers. Present in ovules, prominently in nucellus and integuments.

The protein resides in the membrane. In terms of biological role, involved in the basipetal transport of auxin (IAA) that modulates growth and organs organization. Required for initial divisions in the epidermal/lateral root cap leading to the formation of epidermal cells and a clone of lateral root cap cells, as well as for the maintenance of the radial pattern of cell specification in the root, thus regulating the distinction between the lateral root cap and epidermis. The polypeptide is Protein TORNADO 1 (TRN1) (Arabidopsis thaliana (Mouse-ear cress)).